The primary structure comprises 269 residues: MKIALGIEYNGTHYFGWQRQANVTSVQEKLESAVSFVANEFCQIYCAGRTDSGVHATGQVVHFDTKAIRSEKAWTFGLNANLPADIAVRWAKVVSEDFHARFSATARRYRYLIYNHPLRSALFPTGVTHHHVALDHHLMHQAGQYLLGEHDFSSFRAAQCQSNTPWRNIHHLHVFRQANYIIVDIQANAFVHHMVRNIVGSLLEIGSGKQPVEWMDWLLTQKDRTLAAPTAKPDGLYLVEVKYPNHFNLPKNPLGPLFLGEPKIDFHHD.

The active-site Nucleophile is Asp-51. Tyr-109 contributes to the substrate binding site.

It belongs to the tRNA pseudouridine synthase TruA family. In terms of assembly, homodimer.

It catalyses the reaction uridine(38/39/40) in tRNA = pseudouridine(38/39/40) in tRNA. In terms of biological role, formation of pseudouridine at positions 38, 39 and 40 in the anticodon stem and loop of transfer RNAs. This is tRNA pseudouridine synthase A from Histophilus somni (strain 2336) (Haemophilus somnus).